We begin with the raw amino-acid sequence, 210 residues long: N-(5'-phosphoribosyl)anthranilate isomerase (210 aa).

This sequence belongs to the TrpF family.

It carries out the reaction N-(5-phospho-beta-D-ribosyl)anthranilate = 1-(2-carboxyphenylamino)-1-deoxy-D-ribulose 5-phosphate. The protein operates within amino-acid biosynthesis; L-tryptophan biosynthesis; L-tryptophan from chorismate: step 3/5. The protein is N-(5'-phosphoribosyl)anthranilate isomerase of Trichormus variabilis (strain ATCC 29413 / PCC 7937) (Anabaena variabilis).